A 318-amino-acid polypeptide reads, in one-letter code: Porphobilinogen deaminase (318 aa).

Position 241 is an S-(dipyrrolylmethanemethyl)cysteine (Cys-241).

The protein belongs to the HMBS family. Monomer. Requires dipyrromethane as cofactor.

The enzyme catalyses 4 porphobilinogen + H2O = hydroxymethylbilane + 4 NH4(+). It participates in porphyrin-containing compound metabolism; protoporphyrin-IX biosynthesis; coproporphyrinogen-III from 5-aminolevulinate: step 2/4. Tetrapolymerization of the monopyrrole PBG into the hydroxymethylbilane pre-uroporphyrinogen in several discrete steps. The protein is Porphobilinogen deaminase of Citrifermentans bemidjiense (strain ATCC BAA-1014 / DSM 16622 / JCM 12645 / Bem) (Geobacter bemidjiensis).